The sequence spans 302 residues: Tetrahydromethanopterin S-methyltransferase subunit E (302 aa).

6 helical membrane passes run 3-23 (PLISMGVLALIGVAATIAGAS), 86-106 (PLFALVFGSLIAACVHATFAV), 132-152 (ITPIMGYAFITTFCILVVSYL), 155-175 (VVLGHPFPLTMLAFIWGITIG), 233-253 (PVTGLAFGMTVFLGSWITTIF), and 259-279 (LGWLSVIAGIVIVFILIIWNW).

This sequence belongs to the MtrE family. In terms of assembly, the complex is composed of 8 subunits; MtrA, MtrB, MtrC, MtrD, MtrE, MtrF, MtrG and MtrH.

It localises to the cell membrane. It catalyses the reaction 5-methyl-5,6,7,8-tetrahydromethanopterin + coenzyme M + 2 Na(+)(in) = 5,6,7,8-tetrahydromethanopterin + methyl-coenzyme M + 2 Na(+)(out). The protein operates within one-carbon metabolism; methanogenesis from CO(2); methyl-coenzyme M from 5,10-methylene-5,6,7,8-tetrahydromethanopterin: step 2/2. In terms of biological role, part of a complex that catalyzes the formation of methyl-coenzyme M and tetrahydromethanopterin from coenzyme M and methyl-tetrahydromethanopterin. This is an energy-conserving, sodium-ion translocating step. In Methanosarcina barkeri (strain Fusaro / DSM 804), this protein is Tetrahydromethanopterin S-methyltransferase subunit E.